The following is a 94-amino-acid chain: Small ribosomal subunit protein bS6 (94 aa).

It belongs to the bacterial ribosomal protein bS6 family.

In terms of biological role, binds together with bS18 to 16S ribosomal RNA. The polypeptide is Small ribosomal subunit protein bS6 (Clostridium botulinum (strain 657 / Type Ba4)).